Reading from the N-terminus, the 189-residue chain is uncharacterized protein (189 aa).

The stretch at 31 to 54 (KCENIDDLANRYEVSKQEVEKVFK) forms a coiled coil. EF-hand domains follow at residues 47–82 (QEVEKVFKIFQLMDDDGSGTISSSEVAKMLNELGID), 83–118 (VSPKVVQAVMRSSDVSGDGQIDFEEFLAAVTSKIKL), 120–155 (TVKADVQLMLSKIDNNPEKVISAEELVVAWSETVST), and 157–189 (ITVKEACALIQQADTQGRGKATIHEFITMCQTV). Ca(2+)-binding residues include aspartate 60, aspartate 62, serine 64, threonine 66, glutamate 71, aspartate 96, serine 98, aspartate 100, glutamine 102, glutamate 107, aspartate 133, asparagine 135, glutamate 137, and glutamate 144.

This is an uncharacterized protein from Caenorhabditis elegans.